A 102-amino-acid polypeptide reads, in one-letter code: Large ribosomal subunit protein uL24 (102 aa).

This sequence belongs to the universal ribosomal protein uL24 family. As to quaternary structure, part of the 50S ribosomal subunit.

In terms of biological role, one of two assembly initiator proteins, it binds directly to the 5'-end of the 23S rRNA, where it nucleates assembly of the 50S subunit. One of the proteins that surrounds the polypeptide exit tunnel on the outside of the subunit. The protein is Large ribosomal subunit protein uL24 of Allorhizobium ampelinum (strain ATCC BAA-846 / DSM 112012 / S4) (Agrobacterium vitis (strain S4)).